The sequence spans 447 residues: Elongation factor 1-alpha (447 aa).

The tr-type G domain occupies 5 to 230 (KVHINIVVIG…DNINEPKRPS (226 aa)). A G1 region spans residues 14–21 (GHVDSGKS). 14–21 (GHVDSGKS) lines the GTP pocket. N6,N6-dimethyllysine is present on Lys55. Residues 70-74 (GITID) are G2. At Lys79 the chain carries N6,N6,N6-trimethyllysine. The segment at 91–94 (DAPG) is G3. GTP is bound by residues 91–95 (DAPGH) and 153–156 (NKMD). The interval 153–156 (NKMD) is G4. At Lys187 the chain carries N6,N6,N6-trimethyllysine. A G5 region spans residues 194-196 (SGF). Residue Lys261 is modified to N6-methyllysine. Residue Glu289 is modified to 5-glutamyl glycerylphosphorylethanolamine. Lys306 is modified (N6,N6,N6-trimethyllysine). Glu362 carries the 5-glutamyl glycerylphosphorylethanolamine modification. Lys396 is subject to N6,N6,N6-trimethyllysine.

Belongs to the TRAFAC class translation factor GTPase superfamily. Classic translation factor GTPase family. EF-Tu/EF-1A subfamily.

Its subcellular location is the cytoplasm. Its function is as follows. This protein promotes the GTP-dependent binding of aminoacyl-tRNA to the A-site of ribosomes during protein biosynthesis. In Pisum sativum (Garden pea), this protein is Elongation factor 1-alpha.